The following is a 117-amino-acid chain: Acidic phospholipase A2 (117 aa).

Cystine bridges form between C11–C70, C25–C116, C27–C43, C42–C98, C49–C91, C59–C84, and C77–C89. Ca(2+)-binding residues include Y26, G28, and G30. H46 is a catalytic residue. D47 provides a ligand contact to Ca(2+). N-linked (GlcNAc...) asparagine glycosylation is present at N80. The active site involves D92.

Ca(2+) serves as cofactor. As to expression, expressed by the venom gland.

It localises to the secreted. It carries out the reaction a 1,2-diacyl-sn-glycero-3-phosphocholine + H2O = a 1-acyl-sn-glycero-3-phosphocholine + a fatty acid + H(+). Functionally, snake venom phospholipase A2 (PLA2) that shows strong myotoxicity and induces edema in mice. Shows no cytotoxicity in vitro. Has a strong anticoagulant effect in vitro. PLA2 catalyzes the calcium-dependent hydrolysis of the 2-acyl groups in 3-sn-phosphoglycerides. The sequence is that of Acidic phospholipase A2 from Micrurus dumerilii (Coral snake).